Consider the following 252-residue polypeptide: Probable transcriptional regulatory protein HNE_0161 (252 aa).

The protein belongs to the TACO1 family.

The protein resides in the cytoplasm. The chain is Probable transcriptional regulatory protein HNE_0161 from Hyphomonas neptunium (strain ATCC 15444).